The following is a 250-amino-acid chain: Probable aquaporin TIP-type (250 aa).

The next 2 membrane-spanning stretches (helical) occupy residues 22-42 (AGLAEFISTFIFVFAGSGSGI) and 56-76 (AGLISASIAHAFALFVAVSVG). Residues 85-87 (NPA) carry the NPA 1 motif. A run of 3 helical transmembrane segments spans residues 104–124 (IVYIIAQLLGSIVASALLVFV), 138–158 (VGVGPALVLEIVMTFGLVYTV), and 170–190 (IGIIAPIAIGFIVGANILVGG). The NPA 2 signature appears at 198-200 (NPA). The chain crosses the membrane as a helical span at residues 218 to 238 (YWAGPLIGGGIAGLVYEVLFI).

The protein belongs to the MIP/aquaporin (TC 1.A.8) family. TIP (TC 1.A.8.10) subfamily.

Its subcellular location is the membrane. Aquaporins facilitate the transport of water and small neutral solutes across cell membranes. May have a role in buffering osmotic fluctations in the highly compartmented vacuole of arbuscule cells. This Medicago truncatula (Barrel medic) protein is Probable aquaporin TIP-type (AQP1).